The following is a 187-amino-acid chain: NAC domain-containing protein 104 (187 aa).

One can recognise an NAC domain in the interval 3 to 155 (LPPGFRFFPT…KWVICRVYEQ (153 aa)). Residues 94-161 (VGIKKYLTFY…VYEQNCSEEE (68 aa)) mediate DNA binding. The interval 118–142 (LPDSSSSSSRSSKRSSRASSSSHKP) is disordered.

In terms of tissue distribution, expressed in root xylem vessels. Expressed in stems, vascular tissue of cauline leaves and tracheary elements of sepals.

It localises to the nucleus. Its function is as follows. Probable transcription factor that influences tracheary elements and xylem development by negatively regulating secondary cell wall fiber synthesis and programmed cell death. This Arabidopsis thaliana (Mouse-ear cress) protein is NAC domain-containing protein 104.